Consider the following 195-residue polypeptide: Large ribosomal subunit protein bL17 (195 aa).

The segment at A132–S195 is disordered. Positions P159–T186 are enriched in low complexity.

The protein belongs to the bacterial ribosomal protein bL17 family. Part of the 50S ribosomal subunit. Contacts protein L32.

This is Large ribosomal subunit protein bL17 from Parafrankia sp. (strain EAN1pec).